The chain runs to 545 residues: Light-independent protochlorophyllide reductase subunit N (545 aa).

[4Fe-4S] cluster-binding residues include Cys-102, Cys-127, and Cys-187.

Belongs to the BchN/ChlN family. In terms of assembly, protochlorophyllide reductase is composed of three subunits; ChlL, ChlN and ChlB. Forms a heterotetramer of two ChlB and two ChlN subunits. Requires [4Fe-4S] cluster as cofactor.

The protein localises to the plastid. It localises to the chloroplast. The catalysed reaction is chlorophyllide a + oxidized 2[4Fe-4S]-[ferredoxin] + 2 ADP + 2 phosphate = protochlorophyllide a + reduced 2[4Fe-4S]-[ferredoxin] + 2 ATP + 2 H2O. Its pathway is porphyrin-containing compound metabolism; chlorophyll biosynthesis (light-independent). Component of the dark-operative protochlorophyllide reductase (DPOR) that uses Mg-ATP and reduced ferredoxin to reduce ring D of protochlorophyllide (Pchlide) to form chlorophyllide a (Chlide). This reaction is light-independent. The NB-protein (ChlN-ChlB) is the catalytic component of the complex. This chain is Light-independent protochlorophyllide reductase subunit N, found in Chlamydomonas reinhardtii (Chlamydomonas smithii).